Consider the following 616-residue polypeptide: Pentatricopeptide repeat-containing protein At4g15720 (616 aa).

PPR repeat units follow at residues 63–93, 94–128, 130–164, 165–199, 200–228, 235–269, 270–300, 301–335, 336–371, and 372–402; these read DTFTVNHLVISYVKLKEINTARKLFDEMCEP, NVVSWTSVISGYNDMGKPQNALSMFQKMHEDRPVP, NEYTFASVFKACSALAESRIGKNIHARLEISGLRR, NIVVSSSLVDMYGKCNDVETARRVFDSMIGYGRNV, VSWTSMITAYAQNARGHEAIELFRSFNAA, NQFMLASVISACSSLGRLQWGKVAHGLVTRGGYES, NTVVATSLLDMYAKCGSLSCAEKIFLRIRCH, SVISYTSMIMAKAKHGLGEAAVKLFDEMVAGRINP, NYVTLLGVLHACSHSGLVNEGLEYLSLMAEKYGVVP, and DSRHYTCVVDMLGRFGRVDEAYELAKTIEVG. The type E motif stretch occupies residues 409–484; the sequence is LWGALLSAGR…ERACSWIENK (76 aa). The type E(+) motif stretch occupies residues 485–515; sequence DSVYVFHAGDLSCDESGEIERFLKDLEKRMK. The tract at residues 522-616 is type DYW motif; that stretch reads SSSMITTSSS…NGSCTCRDYW (95 aa).

Belongs to the PPR family. PCMP-H subfamily.

The polypeptide is Pentatricopeptide repeat-containing protein At4g15720 (PCMP-H1) (Arabidopsis thaliana (Mouse-ear cress)).